Here is a 203-residue protein sequence, read N- to C-terminus: HTH-type transcriptional regulator BetI (203 aa).

The HTH tetR-type domain occupies 8–68; that stretch reads PVRRKALVDA…ATIRSLLGKL (61 aa). The segment at residues 31-50 is a DNA-binding region (H-T-H motif); the sequence is TMSEIARTAGVSPALAHHYF.

The protein operates within amine and polyamine biosynthesis; betaine biosynthesis via choline pathway [regulation]. Its function is as follows. Repressor involved in the biosynthesis of the osmoprotectant glycine betaine. It represses transcription of the choline transporter BetT and the genes of BetAB involved in the synthesis of glycine betaine. This is HTH-type transcriptional regulator BetI from Rhizobium meliloti (strain 1021) (Ensifer meliloti).